The sequence spans 274 residues: Formamidopyrimidine-DNA glycosylase (274 aa).

Proline 2 functions as the Schiff-base intermediate with DNA in the catalytic mechanism. Catalysis depends on glutamate 3, which acts as the Proton donor. Residue lysine 58 is the Proton donor; for beta-elimination activity of the active site. Residues histidine 91 and arginine 110 each contribute to the DNA site. The FPG-type zinc finger occupies 238–272 (QVYDKTGQECVRCGTIIEKIQLGGRGTHFCPNCQR). Catalysis depends on arginine 262, which acts as the Proton donor; for delta-elimination activity.

Belongs to the FPG family. In terms of assembly, monomer. Zn(2+) serves as cofactor.

It catalyses the reaction Hydrolysis of DNA containing ring-opened 7-methylguanine residues, releasing 2,6-diamino-4-hydroxy-5-(N-methyl)formamidopyrimidine.. It carries out the reaction 2'-deoxyribonucleotide-(2'-deoxyribose 5'-phosphate)-2'-deoxyribonucleotide-DNA = a 3'-end 2'-deoxyribonucleotide-(2,3-dehydro-2,3-deoxyribose 5'-phosphate)-DNA + a 5'-end 5'-phospho-2'-deoxyribonucleoside-DNA + H(+). In terms of biological role, involved in base excision repair of DNA damaged by oxidation or by mutagenic agents. Acts as a DNA glycosylase that recognizes and removes damaged bases. Has a preference for oxidized purines, such as 7,8-dihydro-8-oxoguanine (8-oxoG). Has AP (apurinic/apyrimidinic) lyase activity and introduces nicks in the DNA strand. Cleaves the DNA backbone by beta-delta elimination to generate a single-strand break at the site of the removed base with both 3'- and 5'-phosphates. This Streptococcus pneumoniae serotype 4 (strain ATCC BAA-334 / TIGR4) protein is Formamidopyrimidine-DNA glycosylase.